The following is a 127-amino-acid chain: Nitrogenase-stabilizing/protective protein NifW (127 aa).

The protein belongs to the NifW family. Homotrimer; associates with NifD.

Its function is as follows. May protect the nitrogenase Fe-Mo protein from oxidative damage. The sequence is that of Nitrogenase-stabilizing/protective protein NifW from Rhizobium etli (strain ATCC 51251 / DSM 11541 / JCM 21823 / NBRC 15573 / CFN 42).